The primary structure comprises 269 residues: 5'-nucleotidase SurE (269 aa).

Positions 11, 12, 43, and 101 each coordinate a divalent metal cation.

The protein belongs to the SurE nucleotidase family. Requires a divalent metal cation as cofactor.

It localises to the cytoplasm. It carries out the reaction a ribonucleoside 5'-phosphate + H2O = a ribonucleoside + phosphate. In terms of biological role, nucleotidase that shows phosphatase activity on nucleoside 5'-monophosphates. This is 5'-nucleotidase SurE from Synechococcus sp. (strain CC9902).